The following is a 419-amino-acid chain: L-rhamnose isomerase (419 aa).

Residues H262, D294, and D296 each coordinate Mn(2+).

It belongs to the rhamnose isomerase family. Homotetramer. It depends on Mn(2+) as a cofactor.

Its subcellular location is the cytoplasm. It catalyses the reaction L-rhamnopyranose = L-rhamnulose. It participates in carbohydrate degradation; L-rhamnose degradation; glycerone phosphate from L-rhamnose: step 1/3. Functionally, catalyzes the interconversion of L-rhamnose and L-rhamnulose. In Klebsiella pneumoniae (strain 342), this protein is L-rhamnose isomerase.